A 107-amino-acid chain; its full sequence is Nucleoid-associated protein GbCGDNIH1_0260 (107 aa).

Belongs to the YbaB/EbfC family. Homodimer.

The protein localises to the cytoplasm. Its subcellular location is the nucleoid. Its function is as follows. Binds to DNA and alters its conformation. May be involved in regulation of gene expression, nucleoid organization and DNA protection. This is Nucleoid-associated protein GbCGDNIH1_0260 from Granulibacter bethesdensis (strain ATCC BAA-1260 / CGDNIH1).